The sequence spans 73 residues: Large ribosomal subunit protein bL31 (73 aa).

The protein belongs to the bacterial ribosomal protein bL31 family. Type A subfamily. In terms of assembly, part of the 50S ribosomal subunit.

Its function is as follows. Binds the 23S rRNA. The sequence is that of Large ribosomal subunit protein bL31 from Rhodospirillum centenum (strain ATCC 51521 / SW).